A 372-amino-acid polypeptide reads, in one-letter code: 18-hydroxynorfluorocurarine reductase (372 aa).

Positions 47, 50, 69, 70, 100, 103, 106, 114, and 172 each coordinate Zn(2+). NADP(+) contacts are provided by residues 197–202 (GLGGIG), lysine 226, 283–285 (LGA), serine 307, and arginine 354.

The protein belongs to the zinc-containing alcohol dehydrogenase family. Homodimer. Zn(2+) serves as cofactor.

It carries out the reaction (19E)-cur-19-en-17-al + NADP(+) = norfluorocurarine + NADPH + H(+). It catalyses the reaction 17,18-epoxy-17-hydroxycur-19-ene + NADP(+) = 18-hydroxynorfluorocurarine + NADPH + H(+). Its pathway is alkaloid biosynthesis. Alcohol dehydrogenase involved in the biosynthesis of curare monoterpene indole alkaloids (MIAs), natural products such as diaboline, a pharmacologically active compound used to regulate blood pressure. Curare alkaloids act as animal glycine receptor antagonists. Catalyzes the conversion of norfluorocurarine to desoxy Wieland-Gumlich aldehyde, and of 18-OH norfluorocurarine to Wieland-Gumlich aldehyde. This is 18-hydroxynorfluorocurarine reductase from Strychnos sp.